A 398-amino-acid chain; its full sequence is Succinyl-diaminopimelate desuccinylase (398 aa).

His73 lines the Zn(2+) pocket. Residue Asp75 is part of the active site. Position 106 (Asp106) interacts with Zn(2+). Residue Glu140 is the Proton acceptor of the active site. Zn(2+) contacts are provided by Glu141, Glu169, and His366.

This sequence belongs to the peptidase M20A family. DapE subfamily. Homodimer. It depends on Zn(2+) as a cofactor. The cofactor is Co(2+).

It catalyses the reaction N-succinyl-(2S,6S)-2,6-diaminopimelate + H2O = (2S,6S)-2,6-diaminopimelate + succinate. It functions in the pathway amino-acid biosynthesis; L-lysine biosynthesis via DAP pathway; LL-2,6-diaminopimelate from (S)-tetrahydrodipicolinate (succinylase route): step 3/3. Functionally, catalyzes the hydrolysis of N-succinyl-L,L-diaminopimelic acid (SDAP), forming succinate and LL-2,6-diaminopimelate (DAP), an intermediate involved in the bacterial biosynthesis of lysine and meso-diaminopimelic acid, an essential component of bacterial cell walls. The protein is Succinyl-diaminopimelate desuccinylase of Agrobacterium fabrum (strain C58 / ATCC 33970) (Agrobacterium tumefaciens (strain C58)).